Reading from the N-terminus, the 142-residue chain is Large ribosomal subunit protein uL16 (142 aa).

The protein belongs to the universal ribosomal protein uL16 family. In terms of assembly, part of the 50S ribosomal subunit.

Its function is as follows. Binds 23S rRNA and is also seen to make contacts with the A and possibly P site tRNAs. This Thermotoga maritima (strain ATCC 43589 / DSM 3109 / JCM 10099 / NBRC 100826 / MSB8) protein is Large ribosomal subunit protein uL16.